Here is a 3381-residue protein sequence, read N- to C-terminus: MLINIKSILWMCSTLIAAHALQKVNMEKSPPVKGSLSGKVNLPCHFSTMPTLPPSYNTTSEFLRIKWSKIELDKTGKDLKETTVLVAQNGNIKIGQDYKGRVSVPTHPEDVGDASLTMVKLLASDAGRYRCDVMYGIEDTQDTVSLTVEGVVFHYRAATSRYTLNFEMAQKACVDIGAVIATPEQLHAAYEDGFEQCDAGWLSDQTVRYPIRVPREGCYGDMMGKEGVRTYGFRAPHETYDVYCYVDHLDGDVFHITAPNKFTFEEAGEECKTQDARLATVGELQAAWRNGFDRCDYGWLLDASVRHPVTVARAQCGGGLLGVRTLYRFENQTGFPTPDSRFDAYCFKPKQNISEATTIELNMLAETVSPTLLEELQVGLDRMTPIVPLITELPVITTKVPPIGNIVNFEQKSTVQPLTSTHRSATESLPPDGSMKKPWDMDYYSPSASGPLGEPDVSEIKEEVPQSTTVVSHHAPDSWDGVKEDLQIKDSVTQIEQIEVGPLVTSMEISKHIPSKEFTVTVTPFVSTTMTLESKTEKKAISTVSESVTTSHYGFTLREGDGEDRISTVRSGQSTSIFSQIPEVITVSKTSEDTTRGQLEDVESVSASTIVSPDSDGSPMDHRQEKQTHGRITEGFLGQYVSTTPFPSQHHTEVELFPYSGDKRLVEGTSTVISPTPRTGRERTETLRPAMRTVTYTNDEIQEKITKDSSIEKIEEEGFSGMKFPTASPEQIHHTKYSVGMTKSFESPALMTTTKPGVTPTEATDVEEDFTTPSGLETDGYQDTTEYEEGITTVHLIQSTLNVEVVTVSKWSLDEDNTTSKPLGSTEHVGSPKLPPALITTTGVSGKDKEMPSLTEDGRDEFTRIPGSTQRPLEEFTEEDTTDHEKFTVRFQPTTSIATTEKSTLRDSITEERVPPFTSTEVRVTHATIEGSALDEGEDVDVSKPLSTVPQFAHPSDVEGSTFVNYSSTQEPTTYVDTSHTIPLPVIPKTEWGVLVPSIPSEGEVLGEPSQDIRVINQTHFEASMYPETVRTTTEITQEATREDFLWKEQTPEKPVSPPSSTTDTAKETTPPLDEQESDGSAYTVFEDRSVMGSDRVSVLVTTPIGKFEQHTSFPPGAVTKAKTDEVVTLTPTTGSKVTFSPWPKQKYETEGTSPRGFVSPFSIGVTQLIEETTTEKREKTSLDYIDLGSGLFEKPKATELPEFSTVKATVPSDTAAFSSADRLHTPSASTEKPPLIDREPDEETTSDMVIIGESTSRVPPTTLEDIVAKKTETDIDREYFTTSSTSTTQPTRPPTVEGKEAFGPQAFSTPEPPAGTKFHPDINVYIIEVRENKTGRMSDFSVSGHPIDSESKEDEPCSEETDPEHDLIAEILPELLGMLHSEEDEEDEECANATDVTTTPSVQYINGKHVVTTVPKDPEAAEARRGQFESVAPSQNFSDSSESDSHQFIITHAGLPTAMQPNESKETTESLEITWRPEIYPETAEPFSSGEPDIFPTASIHEGEATEGPDSITEKNPELDHLVHEHAESVPLFPEESSGDAAIDQESQKIIFSGATEGTFGEEAEKSSTTHTPSMVASSVSAPVSEDASFILTGTPQSDEPLSTVESWVEITPRHTVEFSGSPSIPIPEGSGEAEEDKDKIFAMITDLSQRNTTDPRVTSDTSKIMITESLVDVPTTTIYSISEQVSAVVPTKFVRETDTYEWVFSPPLEETTRKEEEKGTTGTASTVEVHSPTQRLDQFVSPSELESSSETPPDDSAAATRKSFTSQMTPTQSERETTSSTVVFKETEVLDNLAAQTTDPSLSSQPGVLEVSPTVPGSPVSLFMEQGSGEAAVDPETTTVSSLSLNIEPEILAKEEAAGAWSPNVETVFPFEPTEQVLSTAVDREVAETISQTSKENLVSEISGEPTHRAEIKGFSTDFPLEEDFSGDFREYSTVSYPITKEEIVMMEGSGDAAFKDTQMLPSVTPTSDLSNHTADSEEPGSTLVSTSAFPWEEFTASAEGSGEPLLSVSSSVDQVFPSAAGKASGTDSPFIDQRLGEEGAINETDQRSTILPTAEAESTKASTEEGEVKENHTVSMDFPPTVEPDELWPRQEVNPVRQGNGSEIVSEEKTQEQESFEPLQSSVAPEQTTFDSQTFPEPGLQTTGYFTLTTKKTYSTDERMEEEVISLADVSTPTLDSKGLVLYTTLPEVTEKSHFFLATASVTESVPAESVIAGSTIKEEESIKPFPKVTSPIIKESDTDLIFSGLGSGEEVLPTLGSVNFTEIEQVLSTLYPLTSQVQSLEASILNDTSGDYEGMENVANEMRPLISKTDSIFEDGETASSTTLPEILSDARTEGPFTAPLTFSTGPGQPQNQTHRRAEEIQTSRPQPLTDQVSSENSVTAETKETATPATDFLARTYDLEMAKGFVTPTPKPSDLFYEHSGEGSGELDAVGAEVHASGMTQATRQGSTTFVSDRSLEKHPKVPSVEAVTVNGFPTVSMVLPLHPEQREGSPEATGTPASTASYEKATEGAADSFQDHFWGFKDSTLKPDKRKATESIIIDLDKEDKDLILTMTESTILEIIPELTSDKNTVIDIDHTKPIYEDILGMQTDLDPEVPSGPPDSSEESTQVQEKYEAAVNLSSTEENFEASGDILLANYTQATPESKAPEDRNPLDHTDFIFTTGIPILSSETELDVLLPTATSLPIPSKSATVNPESKTEAKTLEDIFESSTLSDGQAIADQSEVISTLGYLERTQNEDEAKKYVSPSFQPEFSSGAEEALTDPTPYVSIGTTYLTAQSLTEAPDVMEGARLPDSIDTSTVSAFSELLSQTPSFPPLSIHLGSGDSEHSEDLQPSALPSTDASTPPVSSGELANIEATFKPSSEEDFYITEPPSLPPDTEPSEDESKPKLLEPTEASATELIAQEEIEIFQNSDNTTSVQVSGEAVKVFPSIETPEAEAIVTAASETKLEGATLRPHSTSASVIHGVEAGVVPQPSPQTSERPTILSPLEISPETQAALIRGEDSTVAAPKQQVPTRMLDSNKQATLSTTELNTELATPSFPLLETSNETSFLIGINEESVEGTAVYLPGPDRCKMNPCLNGGTCYPTETSYVCTCVPGYSGDRCELDFDECHSNPCRNGATCIDGFNTFRCLCLPSYVGALCEQDTETCDYGWHKFQGQCYKYFAHRRTWDAAERECRLQGAHLTSILSHEEQMFVNRVGHDYQWIGLNDKMFEHDFRWTDGSTLQYENWRPNQPDSFFSTGEDCVVIIWHENGQWNDVPCNYHLTYTCKKGTVACGQPPVVENAKTFGKMKPRYEINSLIRYHCKDGFIQRHLPTIRCLGNGRWAMPKITCLNPSAYQRTYSKKYFKNSSSAKDNSINTSKHDHRWSRRWQESRR.

A signal peptide spans 1–20 (MLINIKSILWMCSTLIAAHA). An Ig-like V-type domain is found at 21–147 (LQKVNMEKSP…EDTQDTVSLT (127 aa)). Cystine bridges form between cysteine 44–cysteine 131, cysteine 173–cysteine 244, cysteine 197–cysteine 218, cysteine 271–cysteine 346, and cysteine 295–cysteine 316. Asparagine 57 is a glycosylation site (N-linked (GlcNAc...) asparagine). 2 consecutive Link domains span residues 151–246 (VVFH…YCYV) and 252–348 (DVFH…YCFK). Asparagine 331 and asparagine 352 each carry an N-linked (GlcNAc...) asparagine glycan. The interval 349 to 1336 (PKQNISEATT…IIEVRENKTG (988 aa)) is GAG-alpha (glucosaminoglycan attachment domain). Polar residues predominate over residues 417-427 (PLTSTHRSATE). Disordered stretches follow at residues 417–437 (PLTS…SMKK) and 603–623 (ESVS…MDHR). An O-linked (Xyl...) (chondroitin sulfate) serine glycan is attached at serine 660. The disordered stretch occupies residues 816 to 866 (DNTTSKPLGSTEHVGSPKLPPALITTTGVSGKDKEMPSLTEDGRDEFTRIP). The N-linked (GlcNAc...) asparagine glycan is linked to asparagine 817. A compositionally biased stretch (basic and acidic residues) spans 846–863 (GKDKEMPSLTEDGRDEFT). Asparagine 965 and asparagine 1017 each carry an N-linked (GlcNAc...) asparagine glycan. Over residues 1043 to 1052 (EDFLWKEQTP) the composition is skewed to basic and acidic residues. Disordered stretches follow at residues 1043-1081 (EDFL…SDGS) and 1218-1244 (FSSA…PDEE). N-linked (GlcNAc...) asparagine glycosylation occurs at asparagine 1333. A GAG-beta region spans residues 1337 to 3074 (RMSDFSVSGH…VEGTAVYLPG (1738 aa)). A disordered region spans residues 1338-1362 (MSDFSVSGHPIDSESKEDEPCSEET). The span at 1352–1362 (SKEDEPCSEET) shows a compositional bias: acidic residues. N-linked (GlcNAc...) asparagine glycosylation is present at asparagine 1393. Positions 1417–1428 (KDPEAAEARRGQ) are enriched in basic and acidic residues. 3 disordered regions span residues 1417–1446 (KDPE…ESDS), 1455–1474 (GLPT…SLEI), and 1484–1512 (TAEP…GPDS). N-linked (GlcNAc...) asparagine glycans are attached at residues asparagine 1437 and asparagine 1463. O-linked (Xyl...) (chondroitin sulfate) serine glycosylation is found at serine 1539 and serine 1621. The N-linked (GlcNAc...) asparagine glycan is linked to asparagine 1653. Residues 1708-1785 (PPLEETTRKE…ERETTSSTVV (78 aa)) are disordered. Basic and acidic residues predominate over residues 1712 to 1721 (ETTRKEEEKG). The span at 1726–1738 (ASTVEVHSPTQRL) shows a compositional bias: polar residues. Low complexity predominate over residues 1743-1761 (SPSELESSSETPPDDSAAA). The span at 1764–1784 (KSFTSQMTPTQSERETTSSTV) shows a compositional bias: polar residues. 2 O-linked (Xyl...) (chondroitin sulfate) serine glycosylation sites follow: serine 1928 and serine 1952. The segment covering 1964–1976 (PSVTPTSDLSNHT) has biased composition (polar residues). Disordered stretches follow at residues 1964-1986 (PSVT…GSTL) and 2041-2126 (EGAI…QSSV). Residues asparagine 1974, asparagine 2045, asparagine 2074, and asparagine 2103 are each glycosylated (N-linked (GlcNAc...) asparagine). Over residues 2065 to 2075 (STEEGEVKENH) the composition is skewed to basic and acidic residues. Position 2109 is a phosphoserine (serine 2109). O-linked (Xyl...) (chondroitin sulfate) serine glycans are attached at residues serine 2240 and serine 2247. N-linked (GlcNAc...) asparagine glycans are attached at residues asparagine 2263, asparagine 2290, and asparagine 2356. Disordered stretches follow at residues 2338 to 2388 (EGPF…AETK), 2490 to 2512 (EQRE…EKAT), and 2594 to 2615 (TDLD…TQVQ). 2 stretches are compositionally biased toward polar residues: residues 2345–2357 (LTFS…PQNQ) and 2367–2383 (TSRP…ENSV). 2 positions are modified to phosphoserine: serine 2607 and serine 2608. At threonine 2612 the chain carries Phosphothreonine. 2 N-linked (GlcNAc...) asparagine glycosylation sites follow: asparagine 2623 and asparagine 2641. 3 O-linked (Xyl...) (chondroitin sulfate) serine glycosylation sites follow: serine 2714, serine 2715, and serine 2759. The disordered stretch occupies residues 2819–2893 (PPLSIHLGSG…EPSEDESKPK (75 aa)). Residues 2840 to 2851 (ALPSTDASTPPV) are compositionally biased toward polar residues. N-linked (GlcNAc...) asparagine glycosylation is found at asparagine 2919 and asparagine 3052. One can recognise an EGF-like 1 domain in the interval 3074-3110 (GPDRCKMNPCLNGGTCYPTETSYVCTCVPGYSGDRCE). 11 disulfides stabilise this stretch: cysteine 3078/cysteine 3089, cysteine 3083/cysteine 3098, cysteine 3100/cysteine 3109, cysteine 3116/cysteine 3127, cysteine 3121/cysteine 3136, cysteine 3138/cysteine 3147, cysteine 3154/cysteine 3165, cysteine 3182/cysteine 3274, cysteine 3250/cysteine 3266, cysteine 3281/cysteine 3324, and cysteine 3310/cysteine 3337. The EGF-like 2; calcium-binding domain occupies 3112-3148 (DFDECHSNPCRNGATCIDGFNTFRCLCLPSYVGALCE). The C-type lectin domain occupies 3161 to 3275 (FQGQCYKYFA…CNYHLTYTCK (115 aa)). The 61-residue stretch at 3279-3339 (VACGQPPVVE…WAMPKITCLN (61 aa)) folds into the Sushi domain. N-linked (GlcNAc...) asparagine glycans are attached at residues asparagine 3354 and asparagine 3364. Residues 3355-3365 (SSSAKDNSINT) are compositionally biased toward polar residues. The segment at 3355–3381 (SSSAKDNSINTSKHDHRWSRRWQESRR) is disordered.

Belongs to the aggrecan/versican proteoglycan family. In terms of assembly, interacts with FBLN1. In terms of processing, phosphorylated by FAM20C in the extracellular medium. Proteolytically cleaved by ADAMTS5 and ADAMTS15 in the pericellular matrix surrounding myoblasts, facilitating myoblast contact and fusion which is required for skeletal muscle development and regeneration. Cerebral white matter. Isoform V0 and isoform V1 are expressed in the central nervous system, and in a number of mesenchymal and epithelial tissues; the major isoform V2 is restricted to the central nervous system.

Its subcellular location is the secreted. It is found in the extracellular space. The protein localises to the extracellular matrix. The protein resides in the cell projection. It localises to the cilium. Its subcellular location is the photoreceptor outer segment. It is found in the interphotoreceptor matrix. In terms of biological role, may play a role in intercellular signaling and in connecting cells with the extracellular matrix. May take part in the regulation of cell motility, growth and differentiation. Binds hyaluronic acid. This chain is Versican core protein (VCAN), found in Bos taurus (Bovine).